The following is a 100-amino-acid chain: Small ribosomal subunit protein bS20 (100 aa).

The interval 79–100 is disordered; it reads AAHQKSRLSAAVKQAIEPAPST.

The protein belongs to the bacterial ribosomal protein bS20 family.

Functionally, binds directly to 16S ribosomal RNA. This is Small ribosomal subunit protein bS20 from Prochlorococcus marinus (strain MIT 9303).